The primary structure comprises 475 residues: Ribulose bisphosphate carboxylase large chain (475 aa).

Residues asparagine 123 and threonine 173 each coordinate substrate. The active-site Proton acceptor is lysine 175. Position 177 (lysine 177) interacts with substrate. Residues lysine 201, aspartate 203, and glutamate 204 each coordinate Mg(2+). Lysine 201 is subject to N6-carboxylysine. Histidine 294 functions as the Proton acceptor in the catalytic mechanism. Substrate contacts are provided by arginine 295, histidine 327, and serine 379.

Belongs to the RuBisCO large chain family. Type I subfamily. In terms of assembly, heterohexadecamer of 8 large chains and 8 small chains. It depends on Mg(2+) as a cofactor.

The protein localises to the plastid. It localises to the cyanelle. The catalysed reaction is 2 (2R)-3-phosphoglycerate + 2 H(+) = D-ribulose 1,5-bisphosphate + CO2 + H2O. The enzyme catalyses D-ribulose 1,5-bisphosphate + O2 = 2-phosphoglycolate + (2R)-3-phosphoglycerate + 2 H(+). RuBisCO catalyzes two reactions: the carboxylation of D-ribulose 1,5-bisphosphate, the primary event in carbon dioxide fixation, as well as the oxidative fragmentation of the pentose substrate in the photorespiration process. Both reactions occur simultaneously and in competition at the same active site. This is Ribulose bisphosphate carboxylase large chain from Cyanophora paradoxa.